A 448-amino-acid chain; its full sequence is Trigger factor (448 aa).

The PPIase FKBP-type domain occupies 167 to 253 (GSIVRVDFVE…LKDIKRRDIP (87 aa)).

The protein belongs to the FKBP-type PPIase family. Tig subfamily.

It localises to the cytoplasm. It catalyses the reaction [protein]-peptidylproline (omega=180) = [protein]-peptidylproline (omega=0). Functionally, involved in protein export. Acts as a chaperone by maintaining the newly synthesized protein in an open conformation. Functions as a peptidyl-prolyl cis-trans isomerase. This chain is Trigger factor, found in Borrelia turicatae (strain 91E135).